We begin with the raw amino-acid sequence, 240 residues long: MRSRKSLPRVEQAHLPWHPPGLVAGVDEAGRGPLAGPVVAAAVILDELQPIEGLADSKTLTAARREALFDEIRAKALCCSVAEATVEEIDTLNILQATMLAMRRAVAGLRLKPVRVLVDGNRLPPLDVPAEAIVKGDALVQAISAASILAKVTRDRWCAQLHEAYPHYGFASHKGYGTAEHMAALQAHGACPEHRRSFAPVAAAVQRTVVMQATATIVTTVETTVSVRPAAPRAAEGLHA.

Positions 21-210 (GLVAGVDEAG…VAAAVQRTVV (190 aa)) constitute an RNase H type-2 domain. Residues Asp27, Glu28, and Asp119 each contribute to the a divalent metal cation site.

It belongs to the RNase HII family. It depends on Mn(2+) as a cofactor. Requires Mg(2+) as cofactor.

The protein localises to the cytoplasm. It carries out the reaction Endonucleolytic cleavage to 5'-phosphomonoester.. Functionally, endonuclease that specifically degrades the RNA of RNA-DNA hybrids. The polypeptide is Ribonuclease HII (Paracidovorax citrulli (strain AAC00-1) (Acidovorax citrulli)).